We begin with the raw amino-acid sequence, 209 residues long: Protein lin-28 homolog A (209 aa).

Residues M1–A31 form a disordered region. G2 carries the post-translational modification N-acetylglycine. At S3 the chain carries Phosphoserine. The CSD domain occupies H39–P112. Positions G113–G136 are flexible linker. Phosphoserine is present on S120. 2 consecutive CCHC-type zinc fingers follow at residues D137–L154 and K159–L176. The segment at K177–N209 is disordered. Residue S200 is modified to Phosphoserine.

Belongs to the lin-28 family. Monomer. During skeletal muscle differentiation, associated with translation initiation complexes in the polysomal compartment. Directly interacts with EIF3S2. Interacts with NCL in an RNA-dependent manner. Interacts with TUT4 in the presence of pre-let-7 RNA. In terms of tissue distribution, expressed in embryonic stem cells (ES cells), spermatagonia and testis. Expressed in numerous epithelial tissues including the epithelia of the small intestine, the intralobular duct epithelium of the mammary gland and the epithelia of Henle's loop in the kidney and in the collecting duct (at protein level). Also expressed in the myocardium and skeletal muscle (at protein level).

It is found in the cytoplasm. It localises to the rough endoplasmic reticulum. The protein resides in the P-body. Its subcellular location is the stress granule. The protein localises to the nucleus. It is found in the nucleolus. In terms of biological role, RNA-binding protein that inhibits processing of pre-let-7 miRNAs and regulates translation of mRNAs that control developmental timing, pluripotency and metabolism. Seems to recognize a common structural G-quartet (G4) feature in its miRNA and mRNA targets. 'Translational enhancer' that drives specific mRNAs to polysomes and increases the efficiency of protein synthesis. Its association with the translational machinery and target mRNAs results in an increased number of initiation events per molecule of mRNA and, indirectly, in mRNA stabilization. Binds IGF2 mRNA, MYOD1 mRNA, ARBP/36B4 ribosomal protein mRNA and its own mRNA. Essential for skeletal muscle differentiation program through the translational up-regulation of IGF2 expression. Suppressor of microRNA (miRNA) biogenesis, including that of let-7, miR107, miR-143 and miR-200c. Specifically binds the miRNA precursors (pre-miRNAs), recognizing an 5'-GGAG-3' motif found in pre-miRNA terminal loop, and recruits TUT4 and TUT7 uridylyltransferaseS. This results in the terminal uridylation of target pre-miRNAs. Uridylated pre-miRNAs fail to be processed by Dicer and undergo degradation. The repression of let-7 expression is required for normal development and contributes to maintain the pluripotent state by preventing let-7-mediated differentiation of embryonic stem cells. Localized to the periendoplasmic reticulum area, binds to a large number of spliced mRNAs and inhibits the translation of mRNAs destined for the ER, reducing the synthesis of transmembrane proteins, ER or Golgi lumen proteins, and secretory proteins. Binds to and enhances the translation of mRNAs for several metabolic enzymes, such as PFKP, PDHA1 or SDHA, increasing glycolysis and oxidative phosphorylation. Which, with the let-7 repression may enhance tissue repair in adult tissue. The chain is Protein lin-28 homolog A (Lin28a) from Mus musculus (Mouse).